A 463-amino-acid polypeptide reads, in one-letter code: Protein MRG3-like (463 aa).

A helical transmembrane segment spans residues 54–74 (WVLSTGIVSFIAFNIWWVYWP). TPR repeat units lie at residues 84 to 118 (KILR…CKAE), 128 to 161 (TGIE…FYNE), 358 to 389 (ELIR…ANEN), and 409 to 442 (SLAH…SEMI).

The protein belongs to the MGR3 family.

It is found in the membrane. This chain is Protein MRG3-like, found in Saccharomyces cerevisiae (strain ATCC 204508 / S288c) (Baker's yeast).